Consider the following 114-residue polypeptide: Secretoglobin family 2B member 2 (114 aa).

An N-terminal signal peptide occupies residues 1 to 23 (MKGTLLLLALLVTGELGFQRTEA).

This sequence belongs to the secretoglobin family. Expressed in lacrimal gland.

It localises to the secreted. In Mus musculus (Mouse), this protein is Secretoglobin family 2B member 2 (Scgb2b2).